A 322-amino-acid chain; its full sequence is Biotin synthase (322 aa).

A Radical SAM core domain is found at 39-266 (NQVQISSLLN…KSVVRLSAGR (228 aa)). [4Fe-4S] cluster is bound by residues Cys-54, Cys-58, and Cys-61. 4 residues coordinate [2Fe-2S] cluster: Cys-98, Cys-129, Cys-189, and Arg-261.

This sequence belongs to the radical SAM superfamily. Biotin synthase family. Homodimer. [4Fe-4S] cluster serves as cofactor. [2Fe-2S] cluster is required as a cofactor.

The enzyme catalyses (4R,5S)-dethiobiotin + (sulfur carrier)-SH + 2 reduced [2Fe-2S]-[ferredoxin] + 2 S-adenosyl-L-methionine = (sulfur carrier)-H + biotin + 2 5'-deoxyadenosine + 2 L-methionine + 2 oxidized [2Fe-2S]-[ferredoxin]. It functions in the pathway cofactor biosynthesis; biotin biosynthesis; biotin from 7,8-diaminononanoate: step 2/2. Its function is as follows. Catalyzes the conversion of dethiobiotin (DTB) to biotin by the insertion of a sulfur atom into dethiobiotin via a radical-based mechanism. The protein is Biotin synthase of Vesicomyosocius okutanii subsp. Calyptogena okutanii (strain HA).